The chain runs to 1894 residues: Fibronectin type III domain-containing protein 1 (1894 aa).

The N-terminal stretch at 1 to 32 (MAPEAGATLRAPRRLSWAALLLLAALLPVASS) is a signal peptide. The 93-residue stretch at 39–131 (HPLKPRHVKL…PVYRAESPPG (93 aa)) folds into the Fibronectin type-III 1 domain. An N-linked (GlcNAc...) asparagine glycan is attached at Asn149. 3 Fibronectin type-III domains span residues 158-258 (PNKP…SEED), 262-357 (VPDD…TPES), and 362-457 (APEN…MPTT). Disordered stretches follow at residues 455 to 500 (PTTS…PQGR), 515 to 1271 (ANGG…TVSP), 1311 to 1350 (LSRQPARPSYRQGYNGRPNVEGKVLPGSNGKPNGQRIING), and 1444 to 1515 (THPP…CPPG). Residues 565-574 (TLRPPSRHGH) show a composition bias toward basic residues. The span at 614 to 625 (PSASASPAHHAS) shows a compositional bias: low complexity. Over residues 626–641 (TQGTSHRPSLPASLND) the composition is skewed to polar residues. 2 stretches are compositionally biased toward low complexity: residues 711–722 (SASAPPSRLSPP) and 759–778 (SRSTMSSSVSSHLSSRTQVS). At Ser717 the chain carries Phosphoserine. Residues 786-799 (GESHGDGDREDGGR) show a composition bias toward basic and acidic residues. Composition is skewed to polar residues over residues 941–957 (KYSSLASKAQDVQQSTD) and 1027–1060 (SPSQPRLSLTQAGRPRPTSQGRSHSSSDPYTASS). Residues 1071–1088 (QDEDAQGSYDDDSTEVEA) show a composition bias toward acidic residues. Residues 1166 to 1176 (PLSSKSQQSVS) show a composition bias toward polar residues. The segment covering 1197–1209 (SSSVPKWPSSSTP) has biased composition (low complexity). Residues 1211 to 1226 (GGKDADGSLAKEEREP) are compositionally biased toward basic and acidic residues. The span at 1445 to 1504 (HPPTTTMQPTTTTTPLPTTTTPRPTTATTRRTTTTRRTTTRRPTTTVRTTTRTTTTTTPT) shows a compositional bias: low complexity. The Fibronectin type-III 5 domain occupies 1658 to 1752 (APRNITVVAV…PSVSFVTESD (95 aa)). Asn1661 carries N-linked (GlcNAc...) asparagine glycosylation.

As to expression, almost absent from healthy skin; especially in epidermal keratinocytes, skin fibroblasts or endothelial cells and is barely detectable in benign melanocytic naevi. Expressed in the stroma close to skin tumors, in the tumor cells themselves and in the epidermis of psoriasis.

It is found in the secreted. Functionally, may be an activator of G protein signaling. This chain is Fibronectin type III domain-containing protein 1 (FNDC1), found in Homo sapiens (Human).